A 276-amino-acid chain; its full sequence is Phosphatidylglycerol--prolipoprotein diacylglyceryl transferase (276 aa).

7 helical membrane-spanning segments follow: residues 17–37 (FGPF…VLGW), 59–79 (FLSW…ILFY), 94–114 (VWDG…AILI), 132–152 (VPVP…GELW), 177–197 (PSEL…LLIA), 208–225 (GYLG…RTTA), and 235–255 (LGYL…MIVI). Arg-142 is a binding site for a 1,2-diacyl-sn-glycero-3-phospho-(1'-sn-glycerol).

Belongs to the Lgt family.

The protein resides in the cell inner membrane. It carries out the reaction L-cysteinyl-[prolipoprotein] + a 1,2-diacyl-sn-glycero-3-phospho-(1'-sn-glycerol) = an S-1,2-diacyl-sn-glyceryl-L-cysteinyl-[prolipoprotein] + sn-glycerol 1-phosphate + H(+). It functions in the pathway protein modification; lipoprotein biosynthesis (diacylglyceryl transfer). Catalyzes the transfer of the diacylglyceryl group from phosphatidylglycerol to the sulfhydryl group of the N-terminal cysteine of a prolipoprotein, the first step in the formation of mature lipoproteins. The chain is Phosphatidylglycerol--prolipoprotein diacylglyceryl transferase from Acidiphilium cryptum (strain JF-5).